The sequence spans 131 residues: MSATTDAGQLAAFHRCSTAEEYFTLLEVDYDPRVVAVNRLHILKHFAGELAKLPEAGADAANPRHLLHDYRDALVRSYEAFTNATALDHRLFKVLKDRAPKSAFVPASEITVERLGSTQPSETSEQTEEAR.

This sequence belongs to the NifW family. Homotrimer; associates with NifD.

Its function is as follows. May protect the nitrogenase Fe-Mo protein from oxidative damage. The sequence is that of Nitrogenase-stabilizing/protective protein NifW from Frankia alni (strain DSM 45986 / CECT 9034 / ACN14a).